The primary structure comprises 207 residues: Large ribosomal subunit protein uL3c (207 aa).

Residues 128–148 (FTRGPMTHGSKNHRAPGSIGM) form a disordered region.

This sequence belongs to the universal ribosomal protein uL3 family. In terms of assembly, part of the 50S ribosomal subunit.

Its subcellular location is the plastid. It localises to the chloroplast. In terms of biological role, one of the primary rRNA binding proteins, it binds directly near the 3'-end of the 23S rRNA, where it nucleates assembly of the 50S subunit. This chain is Large ribosomal subunit protein uL3c (rpl3), found in Trieres chinensis (Marine centric diatom).